The primary structure comprises 173 residues: Putative metal-dependent hydrolase BT9727_2476 (173 aa).

Positions 65, 156, and 160 each coordinate Zn(2+).

This sequence belongs to the metal hydrolase YfiT family. As to quaternary structure, homodimer. It depends on Zn(2+) as a cofactor.

The protein localises to the cytoplasm. Its function is as follows. Possible metal-dependent hydrolase. The polypeptide is Putative metal-dependent hydrolase BT9727_2476 (Bacillus thuringiensis subsp. konkukian (strain 97-27)).